The primary structure comprises 170 residues: 3-hydroxyacyl-[acyl-carrier-protein] dehydratase FabZ (170 aa).

Residue His-66 is part of the active site.

Belongs to the thioester dehydratase family. FabZ subfamily.

Its subcellular location is the cytoplasm. It carries out the reaction a (3R)-hydroxyacyl-[ACP] = a (2E)-enoyl-[ACP] + H2O. Involved in unsaturated fatty acids biosynthesis. Catalyzes the dehydration of short chain beta-hydroxyacyl-ACPs and long chain saturated and unsaturated beta-hydroxyacyl-ACPs. In Granulibacter bethesdensis (strain ATCC BAA-1260 / CGDNIH1), this protein is 3-hydroxyacyl-[acyl-carrier-protein] dehydratase FabZ.